The chain runs to 518 residues: Hyccin (518 aa).

Disordered regions lie at residues 385-410 (GLRR…MDQL) and 466-492 (VFSG…EGVA). A compositionally biased stretch (basic and acidic residues) spans 393-403 (SSKEKDKEKDA). Positions 466-484 (VFSGNQPSSRASSPTSNHV) are enriched in polar residues.

Belongs to the Hyccin family. In terms of assembly, component of a phosphatidylinositol 4-kinase (PI4K) complex.

The protein localises to the cytoplasm. The protein resides in the cytosol. It is found in the cell membrane. Component of a complex required to localize phosphatidylinositol 4-kinase (PI4K) to the plasma membrane. The complex acts as a regulator of phosphatidylinositol 4-phosphate (PtdIns(4)P) synthesis. This Danio rerio (Zebrafish) protein is Hyccin (hycc1).